The primary structure comprises 420 residues: Gamma-glutamyl phosphate reductase (420 aa).

It belongs to the gamma-glutamyl phosphate reductase family.

The protein resides in the cytoplasm. It carries out the reaction L-glutamate 5-semialdehyde + phosphate + NADP(+) = L-glutamyl 5-phosphate + NADPH + H(+). It participates in amino-acid biosynthesis; L-proline biosynthesis; L-glutamate 5-semialdehyde from L-glutamate: step 2/2. Catalyzes the NADPH-dependent reduction of L-glutamate 5-phosphate into L-glutamate 5-semialdehyde and phosphate. The product spontaneously undergoes cyclization to form 1-pyrroline-5-carboxylate. In Neisseria meningitidis serogroup C / serotype 2a (strain ATCC 700532 / DSM 15464 / FAM18), this protein is Gamma-glutamyl phosphate reductase.